The sequence spans 486 residues: Keratin-3, type I cytoskeletal 51 kDa (486 aa).

The tract at residues Met1 to Asn125 is head. The segment at Glu126 to Trp161 is coil 1A. The IF rod domain maps to Glu126–Pro442. Residues Tyr162–Met184 are linker 1. The interval Ile185 to Met276 is coil 1B. Residues Gln277–Ile299 form a linker 12 region. The interval Leu300 to Asp438 is coil 2. Residues Leu435–Arg466 form a disordered region. Positions Leu439–Met486 are tail. The segment covering Ser449–Thr461 has biased composition (low complexity).

Belongs to the intermediate filament family. As to quaternary structure, heterotetramer of two type I and two type II keratins.

The polypeptide is Keratin-3, type I cytoskeletal 51 kDa (Xenopus laevis (African clawed frog)).